The chain runs to 153 residues: Insulin-like growth factor 1 (153 aa).

Residues 49 to 77 are b; sequence GPETLCGAELVDALQFVCGDRGFYFSKPT. 3 disulfide bridges follow: Cys54–Cys96, Cys66–Cys109, and Cys95–Cys100. Residues 78–89 are c; that stretch reads GYGSSSRRLHHK. The interval 90 to 110 is a; it reads GIVDECCFQSCDLRRLEMYCA. Positions 111-118 are d; it reads PIKPPKSA. Residues 119–153 constitute a propeptide, e peptide; sequence RSVRAQRHTDMPKAQKEVHLKNTSRGNTGNRNYRM. Residues 119–153 are disordered; sequence RSVRAQRHTDMPKAQKEVHLKNTSRGNTGNRNYRM. Positions 125–138 are enriched in basic and acidic residues; sequence RHTDMPKAQKEVHL. The segment covering 139 to 153 has biased composition (polar residues); it reads KNTSRGNTGNRNYRM.

Belongs to the insulin family. As to quaternary structure, forms a ternary complex with IGFR1 and ITGAV:ITGB3. Forms a ternary complex with IGFR1 and ITGA6:ITGB4. Forms a ternary complex with IGFBP3 and ALS.

It is found in the secreted. Its function is as follows. The insulin-like growth factors, isolated from plasma, are structurally and functionally related to insulin but have a much higher growth-promoting activity. Acts as a ligand for IGF1R. Binds to the alpha subunit of IGF1R, leading to the activation of the intrinsic tyrosine kinase activity which autophosphorylates tyrosine residues in the beta subunit thus initiatiating a cascade of down-stream signaling events leading to activation of the PI3K-AKT/PKB and the Ras-MAPK pathways. Binds to integrins. Its binding to integrins and subsequent ternary complex formation with integrins and IGFR1 are essential for IGF1 signaling. The protein is Insulin-like growth factor 1 of Gallus gallus (Chicken).